A 473-amino-acid chain; its full sequence is Uronate isomerase (473 aa).

It belongs to the metallo-dependent hydrolases superfamily. Uronate isomerase family.

It catalyses the reaction D-glucuronate = D-fructuronate. The enzyme catalyses aldehydo-D-galacturonate = keto-D-tagaturonate. It functions in the pathway carbohydrate metabolism; pentose and glucuronate interconversion. The sequence is that of Uronate isomerase (uxaC) from Geobacillus stearothermophilus (Bacillus stearothermophilus).